The primary structure comprises 191 residues: Elongation factor P (191 aa).

It belongs to the elongation factor P family.

Its subcellular location is the cytoplasm. The protein operates within protein biosynthesis; polypeptide chain elongation. Functionally, involved in peptide bond synthesis. Stimulates efficient translation and peptide-bond synthesis on native or reconstituted 70S ribosomes in vitro. Probably functions indirectly by altering the affinity of the ribosome for aminoacyl-tRNA, thus increasing their reactivity as acceptors for peptidyl transferase. This is Elongation factor P from Ralstonia pickettii (strain 12J).